Here is a 208-residue protein sequence, read N- to C-terminus: Heart- and neural crest derivatives-expressed protein 2 (208 aa).

Disordered regions lie at residues 79-106 (AGAV…TQSI) and 161-197 (EFKK…RTGW). The span at 88-103 (TVKRRPTANRKERRRT) shows a compositional bias: basic residues. Residues 90–142 (KRRPTANRKERRRTQSINSAFAELRECIPNVPADTKLSKIKTLRLATSYIAYL) enclose the bHLH domain. Residues 161–178 (EFKKTDAKEERRKKEMND) are compositionally biased toward basic and acidic residues.

As to quaternary structure, efficient DNA binding requires dimerization with another bHLH protein.

Its subcellular location is the nucleus. Functionally, essential for myocardial and pectoral fin differentiation, patterning and morphogenesis. The polypeptide is Heart- and neural crest derivatives-expressed protein 2 (hand2) (Danio rerio (Zebrafish)).